Reading from the N-terminus, the 215-residue chain is Probable Rab-related GTPase (215 aa).

20–27 serves as a coordination point for GTP; it reads GSSGVGKS. An Effector region motif is present at residues 42-50; sequence VSPTIGAAF. Residues 69–73 and 127–130 contribute to the GTP site; these read DTAGQ and NKID. 2 S-geranylgeranyl cysteine; by host lipidation sites follow: Cys-211 and Cys-212. A Cysteine methyl ester; by host modification is found at Cys-212. Residues 213-215 constitute a propeptide, removed in mature form; it reads YIS.

Belongs to the small GTPase superfamily. Rab family.

Its subcellular location is the host cell membrane. In terms of biological role, may be involved in protein transport. This is Probable Rab-related GTPase from Acanthamoeba polyphaga mimivirus (APMV).